The following is a 418-amino-acid chain: Aspartate aminotransferase, cytoplasmic (418 aa).

Ser-2 carries the post-translational modification N-acetylserine. Positions 38, 135, and 188 each coordinate L-aspartate. Lys-255 carries the post-translational modification N6-(pyridoxal phosphate)lysine. Arg-387 contributes to the L-aspartate binding site. Ser-389 carries the phosphoserine modification.

It belongs to the class-I pyridoxal-phosphate-dependent aminotransferase family. Homodimer. Pyridoxal 5'-phosphate is required as a cofactor.

The protein localises to the cytoplasm. The protein resides in the peroxisome. The enzyme catalyses L-aspartate + 2-oxoglutarate = oxaloacetate + L-glutamate. In terms of biological role, plays a key role in amino acid metabolism. This Saccharomyces cerevisiae (strain ATCC 204508 / S288c) (Baker's yeast) protein is Aspartate aminotransferase, cytoplasmic (AAT2).